Consider the following 261-residue polypeptide: MANLLSKTRRITSILQRSVESLQSDLPYNTIADQLAEIIDCNACIIDGSGIILGYAMKYKTNTDRVEEFFQAKKLPDDYVKSASRIYDTEANLSVENDLTIFPIESKDIYPDGLTTIAPIYGGGMRLGSLIIWRNDKEFNDDDLILIEISSTVVGIQLLNLQTENLEETIRKQTAINMAINTLSYSEMKAVAAILNELDGNEGRLTASVIADRIGITRSVIVNALRKLESAGIIESRSLGMKGTYLKVINEGIFDKLKDYS.

The segment at 1 to 159 is GAF domain; the sequence is MANLLSKTRR…SSTVVGIQLL (159 aa). A DNA-binding region (H-T-H motif) is located at residues 207–226; sequence ASVIADRIGITRSVIVNALR.

Belongs to the CodY family.

It localises to the cytoplasm. Its function is as follows. DNA-binding global transcriptional regulator which is involved in the adaptive response to starvation and acts by directly or indirectly controlling the expression of numerous genes in response to nutrient availability. During rapid exponential growth, CodY is highly active and represses genes whose products allow adaptation to nutrient depletion. The sequence is that of Global transcriptional regulator CodY from Streptococcus mutans serotype c (strain ATCC 700610 / UA159).